Here is an 88-residue protein sequence, read N- to C-terminus: MDRPRTPPPSYSEVLMMDVMYGQVSPHASNDTSFVECLPPPQSSRSAWNLWNKRRKTFAFLVLTGLAIAMILFIAFVIYVFNVNRRKK.

Threonine 6 bears the Phosphothreonine mark. The PPXY motif signature appears at 8-11 (PPSY). Residues 58 to 78 (FAFLVLTGLAIAMILFIAFVI) traverse the membrane as a helical segment.

As to quaternary structure, interacts with host ITCH; this interaction probably mediates ITCH degradation. Interacts probably with NEDD4.

The protein resides in the membrane. In terms of biological role, down-regulates the TCR/CD3E complex and the transferrin receptor TFRC in host T-cells by blocking them from recycling back to the cell surface. The chain is U24 protein (U24) from Human herpesvirus 6B (strain Z29) (HHV-6 variant B).